Reading from the N-terminus, the 326-residue chain is Protein C10 (326 aa).

This sequence belongs to the poxviridae C4/C10 protein family.

This chain is Protein C10, found in Homo sapiens (Human).